We begin with the raw amino-acid sequence, 363 residues long: NADH-quinone oxidoreductase subunit H (363 aa).

10 consecutive transmembrane segments (helical) span residues 29–49 (VLKI…YVVW), 62–82 (GPMY…KLLF), 94–114 (AIFV…WAVV), 127–147 (VGLL…ILAG), 166–186 (VVSY…AAGS), 202–222 (FFDW…VSGV), 239–257 (IVAG…LFFL), 264–286 (ILVS…QGWV), 293–313 (LIDW…LFFA), and 339–359 (FIPL…SGVI).

It belongs to the complex I subunit 1 family. In terms of assembly, NDH-1 is composed of 14 different subunits. Subunits NuoA, H, J, K, L, M, N constitute the membrane sector of the complex.

The protein localises to the cell inner membrane. It carries out the reaction a quinone + NADH + 5 H(+)(in) = a quinol + NAD(+) + 4 H(+)(out). NDH-1 shuttles electrons from NADH, via FMN and iron-sulfur (Fe-S) centers, to quinones in the respiratory chain. The immediate electron acceptor for the enzyme in this species is believed to be ubiquinone. Couples the redox reaction to proton translocation (for every two electrons transferred, four hydrogen ions are translocated across the cytoplasmic membrane), and thus conserves the redox energy in a proton gradient. This subunit may bind ubiquinone. This chain is NADH-quinone oxidoreductase subunit H, found in Xylella fastidiosa (strain Temecula1 / ATCC 700964).